A 261-amino-acid polypeptide reads, in one-letter code: Glucosamine-6-phosphate deaminase (261 aa).

Asp-67 acts as the Proton acceptor; for enolization step in catalysis. Asn-136 functions as the For ring-opening step in the catalytic mechanism. His-138 acts as the Proton acceptor; for ring-opening step in catalysis. Catalysis depends on Glu-143, which acts as the For ring-opening step.

Belongs to the glucosamine/galactosamine-6-phosphate isomerase family. NagB subfamily.

The catalysed reaction is alpha-D-glucosamine 6-phosphate + H2O = beta-D-fructose 6-phosphate + NH4(+). It participates in amino-sugar metabolism; N-acetylneuraminate degradation; D-fructose 6-phosphate from N-acetylneuraminate: step 5/5. Its function is as follows. Catalyzes the reversible isomerization-deamination of glucosamine 6-phosphate (GlcN6P) to form fructose 6-phosphate (Fru6P) and ammonium ion. The protein is Glucosamine-6-phosphate deaminase of Cutibacterium acnes (strain DSM 16379 / KPA171202) (Propionibacterium acnes).